We begin with the raw amino-acid sequence, 203 residues long: Lipoprotein MlpJ (203 aa).

An N-terminal signal peptide occupies residues 1–17 (MKIINILFCISLLLLNS). Cys18 carries the N-palmitoyl cysteine lipid modification. Cys18 carries the S-diacylglycerol cysteine lipid modification. The tract at residues 26–47 (LKNNAQQTKSRKKRDLSQEELP) is disordered.

This sequence belongs to the Multicopy lipoprotein (Mlp) family.

It is found in the cell outer membrane. In terms of biological role, an outer membrane protein that may participate in pathogenesis. Some human Lyme disease patients have antibodies against this protein. The Mlp proteins probably undergo intragenic recombination, generating new alleles. In Borreliella burgdorferi (strain ATCC 35210 / DSM 4680 / CIP 102532 / B31) (Borrelia burgdorferi), this protein is Lipoprotein MlpJ.